Consider the following 341-residue polypeptide: Malate dehydrogenase 1, mitochondrial (341 aa).

Residues 1–22 (MFRSMLVRSSASAKQAVIRRSF) constitute a mitochondrion transit peptide. NAD(+)-binding positions include 36–42 (GAAGGIG) and D62. 2 residues coordinate substrate: R109 and R115. NAD(+) contacts are provided by residues N122 and 145 to 147 (ISN). Residues N147 and R181 each contribute to the substrate site. Catalysis depends on H205, which acts as the Proton acceptor. M256 serves as a coordination point for NAD(+).

This sequence belongs to the LDH/MDH superfamily. MDH type 1 family. In terms of assembly, homodimer. In terms of processing, forms intramolecular disulfide bonds. As to expression, expressed in rosette leaves.

It localises to the mitochondrion matrix. It catalyses the reaction (S)-malate + NAD(+) = oxaloacetate + NADH + H(+). Negatively regulated by ATP. Not redox-regulated. The formation of intramolecular disulfide bonds does not alter enzymatic activity. Its function is as follows. Catalyzes a reversible NAD-dependent dehydrogenase reaction involved in central metabolism and redox homeostasis between organelle compartments. Required for carbon dioxide and energy partitioning in leaves. May limit photorespiration during the dark phase. Its activity is essential to shuttle reductants out from the mitochondria to support the photorespiratory flux. Can convert 2-oxoglutarate to (S)-2-hydroxyglutarate in vitro. This Arabidopsis thaliana (Mouse-ear cress) protein is Malate dehydrogenase 1, mitochondrial.